We begin with the raw amino-acid sequence, 512 residues long: Podocan-like protein 1 (512 aa).

The signal sequence occupies residues 1–26; sequence MAESGLAMWPSLLLLLLLPGPPPVAG. The 38-residue stretch at 37–74 folds into the LRRNT domain; sequence ESLQPLPRACPLRCSCPRVDTVDCDGLDLRVFPDNITR. The N-linked (GlcNAc...) asparagine glycan is linked to Asn-71. LRR repeat units follow at residues 75–96, 99–119, 125–146, 147–167, 170–193, 196–216, 217–238, 241–261, 267–288, 289–309, 312–332, 338–359, 360–380, 383–396, 409–430, 431–451, and 454–474; these read AAQHLSLQNNQLQELPYNELSR, GLRTLNLHNNLISSEGLPDEA, QLQHLCVAHNKLSVAPQFLPRS, LRVADLAANQVMEIFPLTFGE, ALRSVYLHNNQLSNAGLPPDAFRG, AIATLSLSNNQLSYLPPSLPP, SLERLHLQNNLISKVPRGALSR, QLRELYLQHNQLTDSGLDATT, SLEYLDLSHNQLTTVPAGLPRT, LAILHLGRNRIRQVEAARLHG, GLRYLLLQHNQLGSSGLPAGA, GLHTLHLYGNGLDRVPPALPRR, LRALVLPHNHVAALGARDLVA, GLTELNLAYNRLAS, ALRSLDLAGNQLTRLPMGLPTG, LRTLQLQRNQLRMLEPEPLAG, and QLRELSLAHNRLRVGDIGPGT.

This sequence belongs to the small leucine-rich proteoglycan (SLRP) family. SLRP class V subfamily. N-glycosylated.

Its subcellular location is the secreted. It localises to the extracellular space. It is found in the extracellular matrix. This Homo sapiens (Human) protein is Podocan-like protein 1 (PODNL1).